A 536-amino-acid polypeptide reads, in one-letter code: Pentatricopeptide repeat-containing protein At2g06000 (536 aa).

12 PPR repeats span residues 102–136 (SFWT…GVSP), 137–167 (NNRL…SFEV), 170–200 (CCMV…HLRF), 205–239 (DTKT…GCEP), 240–274 (DIVT…SVCS), 276–310 (DVVT…GIYP), 311–345 (TNVT…GCFP), 346–380 (DVVT…GMFP), 381–415 (NAFT…DIIP), 416–450 (QPFM…KCKP), 451–485 (DKIT…GCSP), and 486–523 (DKIT…NVVP).

Belongs to the PPR family. P subfamily.

This is Pentatricopeptide repeat-containing protein At2g06000 from Arabidopsis thaliana (Mouse-ear cress).